Consider the following 220-residue polypeptide: MATTASPFLSPAKLSLERRLPRATWTARRSVRFPPVRAQDQQQQVKEEEEEAAVENLPPPPQEEEQRRERKTRRQGPAQPLPVQPLAESKNMSREYGGQWLSCTTRHIRIYAAYINPETNAFDQTQMDKLTLLLDPTDEFVWTDETCQKVYDEFQDLVDHYEGAELSEYTLRLIGSDLEHFIRKLLYDGEIKYNMMSRVLNFSMGKPRIKFNSSQIPDVK.

The N-terminal 37 residues, 1 to 37 (MATTASPFLSPAKLSLERRLPRATWTARRSVRFPPVR), are a transit peptide targeting the chloroplast. The tract at residues 20 to 91 (LPRATWTARR…PVQPLAESKN (72 aa)) is disordered. The span at 34-44 (PPVRAQDQQQQ) shows a compositional bias: low complexity.

This sequence belongs to the NDH complex subunit M family. As to quaternary structure, part of the chloroplast NDH complex, composed of a mixture of chloroplast and nucleus encoded subunits. Component of the NDH subcomplex A, at least composed of ndhH, ndhI, ndhJ, ndhK, ndhL, ndhM, ndhN and ndhO.

Its subcellular location is the plastid. It is found in the chloroplast thylakoid membrane. It carries out the reaction a plastoquinone + NADH + (n+1) H(+)(in) = a plastoquinol + NAD(+) + n H(+)(out). It catalyses the reaction a plastoquinone + NADPH + (n+1) H(+)(in) = a plastoquinol + NADP(+) + n H(+)(out). Functionally, NDH shuttles electrons from NAD(P)H:plastoquinone, via FMN and iron-sulfur (Fe-S) centers, to quinones in the photosynthetic chain and possibly in a chloroplast respiratory chain. The immediate electron acceptor for the enzyme in this species is believed to be plastoquinone. Couples the redox reaction to proton translocation, and thus conserves the redox energy in a proton gradient. In Oryza sativa subsp. indica (Rice), this protein is NAD(P)H-quinone oxidoreductase subunit M, chloroplastic.